The chain runs to 448 residues: Adenosylhomocysteinase (448 aa).

Positions 61, 136, and 161 each coordinate substrate. 162 to 164 (TTA) lines the NAD(+) pocket. Lys-191 and Asp-195 together coordinate substrate. Residues Asn-196, 225–230 (GYGDVG), Glu-248, Asn-283, 304–306 (IGH), and Asn-360 each bind NAD(+).

Belongs to the adenosylhomocysteinase family. It depends on NAD(+) as a cofactor.

Its subcellular location is the cytoplasm. It catalyses the reaction S-adenosyl-L-homocysteine + H2O = L-homocysteine + adenosine. It participates in amino-acid biosynthesis; L-homocysteine biosynthesis; L-homocysteine from S-adenosyl-L-homocysteine: step 1/1. Functionally, may play a key role in the regulation of the intracellular concentration of adenosylhomocysteine. The polypeptide is Adenosylhomocysteinase (Rhodopirellula baltica (strain DSM 10527 / NCIMB 13988 / SH1)).